The following is a 468-amino-acid chain: Nuclear pore complex protein Nup50 (468 aa).

The segment covering 1 to 16 (MAKRNAEKELTDRNWD) has biased composition (basic and acidic residues). The segment at 1 to 26 (MAKRNAEKELTDRNWDQEDEAEEVGT) is disordered. Alanine 2 bears the N-acetylalanine mark. At lysine 8 the chain carries N6-acetyllysine. Serine 52 carries the post-translational modification Phosphoserine. Copy 1 of the repeat occupies 76–77 (FG). The interval 76 to 304 (FGSGAGGKPL…FSPGNSSLFG (229 aa)) is 5 X 2 AA repeats of F-G. N6-acetyllysine is present on lysine 83. Repeat 2 spans residues 113 to 114 (FG). 2 disordered regions span residues 122–148 (TTLV…LASS) and 201–224 (HGNS…SPSL). An N6-acetyllysine modification is found at lysine 127. Residues 137-148 (SQQPSSSGLASS) show a composition bias toward low complexity. Positions 144-206 (GLASSKACVG…IEQQHGNSGR (63 aa)) are binding to CDKN1B. Residues serine 208 and serine 221 each carry the phosphoserine modification. Copy 3 of the repeat occupies 225–226 (FG). Serine 234 is modified (phosphoserine). The interval 238 to 269 (FHGNKTEDTPDKKMEVASEKKTDPSSLGATSA) is disordered. Residues 241–260 (NKTEDTPDKKMEVASEKKTD) show a composition bias toward basic and acidic residues. A phosphothreonine mark is found at threonine 246 and threonine 259. The residue at position 270 (serine 270) is a Phosphoserine. Residues 273–274 (FG) form repeat 4. Serine 296 bears the Phosphoserine mark. Repeat unit 5 spans residues 303–304 (FG). A compositionally biased stretch (polar residues) spans 304-317 (GKDTTQSKPVSSPF). A disordered region spans residues 304–345 (GKDTTQSKPVSSPFPTKPLEGQAEGDSGECKGGDEEENDEPP). In terms of domain architecture, RanBD1 spans 335-468 (GGDEEENDEP…HKILLEKKDA (134 aa)). Lysine 353 participates in a covalent cross-link: Glycyl lysine isopeptide (Lys-Gly) (interchain with G-Cter in SUMO2). Residue lysine 450 is modified to N6-acetyllysine.

In terms of assembly, interacts with Importin alpha-2, Importin beta, Importin beta-2, NUP153, Ran binding protein 7, CDKN1B and itself. Does not interact with TPR. Ubiquitous. Highest levels in testis, peripheral blood leukocytes and fetal liver.

The protein localises to the nucleus. It is found in the nuclear pore complex. It localises to the nucleus membrane. Its function is as follows. Component of the nuclear pore complex that has a direct role in nuclear protein import. Actively displaces NLSs from importin-alpha, and facilitates disassembly of the importin-alpha:beta-cargo complex and importin recycling. Interacts with regulatory proteins of cell cycle progression including CDKN1B. This interaction is required for correct intracellular transport and degradation of CDKN1B. This Homo sapiens (Human) protein is Nuclear pore complex protein Nup50 (NUP50).